The sequence spans 358 residues: DNA replication and repair protein RecF (358 aa).

30-37 (GNNGSGKT) serves as a coordination point for ATP.

This sequence belongs to the RecF family.

Its subcellular location is the cytoplasm. Functionally, the RecF protein is involved in DNA metabolism; it is required for DNA replication and normal SOS inducibility. RecF binds preferentially to single-stranded, linear DNA. It also seems to bind ATP. This Histophilus somni (strain 129Pt) (Haemophilus somnus) protein is DNA replication and repair protein RecF.